The primary structure comprises 220 residues: Kinetochore protein Spc25 (220 aa).

Positions 41–119 (ILLDVKEAAA…NEIMERIHTL (79 aa)) form a coiled coil.

The protein belongs to the SPC25 family. Component of the Ndc80 complex, which is composed of Ndc80, Nuf2 and Spc25.

It localises to the nucleus. It is found in the chromosome. The protein localises to the centromere. The protein resides in the kinetochore. Functionally, acts as a component of the essential kinetochore-associated Ndc80 complex, which is required for chromosome segregation and spindle checkpoint activity during meiosis and mitosis. Required for kinetochore integrity and the organization of stable microtubule binding sites in the outer plate of the kinetochore. Participates in SAC signaling that responds specifically to disruptions in spindle microtubule dynamics. The NDC80 complex synergistically enhances the affinity of the SKA1 complex for microtubules and may allow the NDC80 complex to track depolymerizing microtubules. This chain is Kinetochore protein Spc25, found in Drosophila erecta (Fruit fly).